A 362-amino-acid polypeptide reads, in one-letter code: Beta-ketoacyl-[acyl-carrier-protein] synthase III 2 (362 aa).

Residues C113 and H251 contribute to the active site. The interval 252-256 (QANIR) is ACP-binding. N281 is a catalytic residue.

It belongs to the thiolase-like superfamily. FabH family. Homodimer.

The protein localises to the cytoplasm. It carries out the reaction malonyl-[ACP] + acetyl-CoA + H(+) = 3-oxobutanoyl-[ACP] + CO2 + CoA. Its pathway is lipid metabolism; fatty acid biosynthesis. In terms of biological role, catalyzes the condensation reaction of fatty acid synthesis by the addition to an acyl acceptor of two carbons from malonyl-ACP. Catalyzes the first condensation reaction which initiates fatty acid synthesis and may therefore play a role in governing the total rate of fatty acid production. Possesses both acetoacetyl-ACP synthase and acetyl transacylase activities. Its substrate specificity determines the biosynthesis of branched-chain and/or straight-chain of fatty acids. This is Beta-ketoacyl-[acyl-carrier-protein] synthase III 2 from Vibrio cholerae serotype O1 (strain ATCC 39315 / El Tor Inaba N16961).